The primary structure comprises 509 residues: DNA nucleotidylexotransferase (509 aa).

Residues 1 to 25 (MDPLCTASSGPRKKRPRQVGASMAS) are disordered. The Nuclear localization signal signature appears at 11-17 (PRKKRPR). Residues 27–124 (PHDIKFQNLV…KPVEITGKHQ (98 aa)) form the BRCT domain. Residues 151 to 509 (SQYACQRKTT…DYIEPWERNA (359 aa)) are mediates interaction with DNTTIP2. An involved in DNA binding region spans residues 258–262 (VGLKT). A 2'-deoxyribonucleoside 5'-triphosphate-binding positions include 333 to 338 (GFRRGK) and 342 to 345 (HDVD). Mg(2+) is bound by residues Asp-343, Asp-345, and Asp-433. 448-449 (GW) contributes to the a 2'-deoxyribonucleoside 5'-triphosphate binding site.

It belongs to the DNA polymerase type-X family. In terms of assembly, interacts with PRP19 and DNTTIP1. Forms a ternary complex with DNTTIP2 and core histone. Released from this complex by PCNA. Interacts with TRERF1. Mg(2+) is required as a cofactor.

It localises to the nucleus. The enzyme catalyses DNA(n) + a 2'-deoxyribonucleoside 5'-triphosphate = DNA(n+1) + diphosphate. In terms of biological role, template-independent DNA polymerase which catalyzes the random addition of deoxynucleoside 5'-triphosphate to the 3'-end of a DNA initiator. One of the in vivo functions of this enzyme is the addition of nucleotides at the junction (N region) of rearranged Ig heavy chain and T-cell receptor gene segments during the maturation of B- and T-cells. This is DNA nucleotidylexotransferase (DNTT) from Bos taurus (Bovine).